A 421-amino-acid chain; its full sequence is Myb-related protein Pp2 (421 aa).

2 HTH myb-type domains span residues 9 to 61 and 62 to 116; these read KVGL…TNYL and RPDL…KKRL. DNA-binding regions (H-T-H motif) lie at residues 37–61 and 89–112; these read WRAI…TNYL and WSRI…NTRL. A disordered region spans residues 119-240; it reads QGLDPNTHLP…VTTKSHEDHR (122 aa). Over residues 136–147 the composition is skewed to acidic residues; the sequence is DTEDDTDDEGGD.

It localises to the nucleus. In terms of biological role, possible transcription activator. The protein is Myb-related protein Pp2 (PP2) of Physcomitrium patens (Spreading-leaved earth moss).